A 244-amino-acid polypeptide reads, in one-letter code: CTD nuclear envelope phosphatase 1 (244 aa).

The helical transmembrane segment at 7-29 (LLGLRGFVAFAAKLWSFVLYLLR) threads the bilayer. The region spanning 58 to 225 (QVKRKVLVLD…NLLPMLDALR (168 aa)) is the FCP1 homology domain.

Belongs to the dullard family. As to quaternary structure, interacts with bmpr1a, bmpr1b and bmpr2.

It is found in the membrane. It localises to the cytoplasm. Its subcellular location is the perinuclear region. It carries out the reaction O-phospho-L-seryl-[protein] + H2O = L-seryl-[protein] + phosphate. It catalyses the reaction O-phospho-L-threonyl-[protein] + H2O = L-threonyl-[protein] + phosphate. Serine/threonine protein phosphatase that may dephosphorylate and activate lipins. Lipins are phosphatidate phosphatases that catalyze the conversion of phosphatidic acid to diacylglycerol and control the metabolism of fatty acids at different levels. May indirectly modulate the lipid composition of nuclear and/or endoplasmic reticulum membranes and be required for proper nuclear membrane morphology and/or dynamics. May also indirectly regulate the production of lipid droplets and triacylglycerol. Induces neuronal differentiation by antagonizing BMP signaling. Acts both by dephosphorylating BMPR1A and by promoting BMPR2 proteasomal degradation. This Xenopus laevis (African clawed frog) protein is CTD nuclear envelope phosphatase 1 (ctdnep1).